The sequence spans 152 residues: Nucleoside diphosphate kinase A 2 (152 aa).

K12, F60, R88, T94, R105, and N115 together coordinate ATP. H118 acts as the Pros-phosphohistidine intermediate in catalysis.

This sequence belongs to the NDK family. Homohexamer. The cofactor is Mg(2+). Post-translationally, the N-terminus is blocked.

The protein localises to the cytoplasm. The protein resides in the cell membrane. It localises to the nucleus. It carries out the reaction a 2'-deoxyribonucleoside 5'-diphosphate + ATP = a 2'-deoxyribonucleoside 5'-triphosphate + ADP. It catalyses the reaction a ribonucleoside 5'-diphosphate + ATP = a ribonucleoside 5'-triphosphate + ADP. Its activity is regulated as follows. Autophosphorylation at His-118 increases serine/threonine protein kinase activity of the enzyme. Interaction with the SET complex inhibits exonuclease activity. In terms of biological role, major role in the synthesis of nucleoside triphosphates other than ATP. Possesses nucleoside-diphosphate kinase, serine/threonine-specific protein kinase, geranyl and farnesyl pyrophosphate kinase, histidine protein kinase and 3'-5' exonuclease activities. Involved in cell proliferation, differentiation and development, signal transduction, G protein-coupled receptor endocytosis, and gene expression. Required for neural development including neural patterning and cell fate determination. This is Nucleoside diphosphate kinase A 2 (NME1-2) from Bos taurus (Bovine).